The chain runs to 255 residues: Adenosylcobinamide-GDP ribazoletransferase (255 aa).

6 consecutive transmembrane segments (helical) span residues 43 to 63 (LVGT…SLFF), 64 to 84 (PYQV…GAFH), 113 to 133 (IGTY…VFLT), 141 to 161 (FGLM…TLIY), 195 to 215 (LAAI…AILF), and 234 to 254 (CLGG…IAVV).

The protein belongs to the CobS family. The cofactor is Mg(2+).

The protein localises to the cell inner membrane. It catalyses the reaction alpha-ribazole + adenosylcob(III)inamide-GDP = adenosylcob(III)alamin + GMP + H(+). The catalysed reaction is alpha-ribazole 5'-phosphate + adenosylcob(III)inamide-GDP = adenosylcob(III)alamin 5'-phosphate + GMP + H(+). The protein operates within cofactor biosynthesis; adenosylcobalamin biosynthesis; adenosylcobalamin from cob(II)yrinate a,c-diamide: step 7/7. Joins adenosylcobinamide-GDP and alpha-ribazole to generate adenosylcobalamin (Ado-cobalamin). Also synthesizes adenosylcobalamin 5'-phosphate from adenosylcobinamide-GDP and alpha-ribazole 5'-phosphate. This chain is Adenosylcobinamide-GDP ribazoletransferase, found in Vibrio vulnificus (strain CMCP6).